Here is a 312-residue protein sequence, read N- to C-terminus: Carbonic anhydrase 4 (312 aa).

An N-terminal signal peptide occupies residues 1 to 18 (MRMLLALLALSAARPSAS). Residues 21-285 (SHWCYEVQAE…LGQRTVIKSG (265 aa)) form the Alpha-carbonic anhydrase domain. Disulfide bonds link cysteine 24-cysteine 36 and cysteine 46-cysteine 229. The active-site Proton donor/acceptor is histidine 88. The Zn(2+) site is built by histidine 115, histidine 117, and histidine 140. 225 to 226 (TT) is a binding site for substrate. The GPI-anchor amidated serine moiety is linked to residue serine 284. A propeptide spans 285–312 (GAPGRPLPWALPALLGPMLACLLAGFLR) (removed in mature form).

It belongs to the alpha-carbonic anhydrase family. As to quaternary structure, interacts with SLC4A4. The cofactor is Zn(2+). In terms of tissue distribution, expressed in the endothelium of the choriocapillaris in eyes (at protein level). Not expressed in the retinal epithelium at detectable levels.

It is found in the cell membrane. The enzyme catalyses hydrogencarbonate + H(+) = CO2 + H2O. Its activity is regulated as follows. Activated by histamine, L-adrenaline, D-phenylalanine, L- and D-histidine. Inhibited by coumarins, saccharin, sulfonamide derivatives such as acetazolamide and Foscarnet (phosphonoformate trisodium salt). Its function is as follows. Catalyzes the reversible hydration of carbon dioxide into bicarbonate and protons and thus is essential to maintaining intracellular and extracellular pH. May stimulate the sodium/bicarbonate transporter activity of SLC4A4 that acts in pH homeostasis. It is essential for acid overload removal from the retina and retina epithelium, and acid release in the choriocapillaris in the choroid. This is Carbonic anhydrase 4 from Homo sapiens (Human).